Here is a 128-residue protein sequence, read N- to C-terminus: Fluoride-specific ion channel FluC (128 aa).

The next 4 helical transmembrane spans lie at 5–25 (IVAIFVGAGLGAVLRWFLGLA), 35–55 (LGTLAANLLGGYAIGIAAVVF), 67–87 (LFVITGFLGGLTTFSTYSVEV), and 96–116 (FGWAFAVAVLHLTGSFTLTAL). Residues glycine 75 and threonine 78 each contribute to the Na(+) site.

Belongs to the fluoride channel Fluc/FEX (TC 1.A.43) family.

The protein resides in the cell inner membrane. The enzyme catalyses fluoride(in) = fluoride(out). Na(+) is not transported, but it plays an essential structural role and its presence is essential for fluoride channel function. Fluoride-specific ion channel. Important for reducing fluoride concentration in the cell, thus reducing its toxicity. The chain is Fluoride-specific ion channel FluC from Burkholderia vietnamiensis (strain G4 / LMG 22486) (Burkholderia cepacia (strain R1808)).